Here is a 1431-residue protein sequence, read N- to C-terminus: DNA-directed RNA polymerase subunit beta' (1431 aa).

Zn(2+)-binding residues include C66, C68, C81, and C84. Positions 470, 472, and 474 each coordinate Mg(2+). 4 residues coordinate Zn(2+): C813, C887, C894, and C897.

Belongs to the RNA polymerase beta' chain family. The RNAP catalytic core consists of 2 alpha, 1 beta, 1 beta' and 1 omega subunit. When a sigma factor is associated with the core the holoenzyme is formed, which can initiate transcription. Mg(2+) serves as cofactor. Zn(2+) is required as a cofactor.

It catalyses the reaction RNA(n) + a ribonucleoside 5'-triphosphate = RNA(n+1) + diphosphate. Its function is as follows. DNA-dependent RNA polymerase catalyzes the transcription of DNA into RNA using the four ribonucleoside triphosphates as substrates. This is DNA-directed RNA polymerase subunit beta' from Parabacteroides distasonis (strain ATCC 8503 / DSM 20701 / CIP 104284 / JCM 5825 / NCTC 11152).